We begin with the raw amino-acid sequence, 447 residues long: MAGVGGGNDFQWCFSQVKGAIDEDVAEADIISTVEFNCSGDLLATGDKGGRVVIFQREQENKSRPHSRGEYNVYSTFQSHEPEFDYLKSLEIEEKINKIRWLPQQNAAHFLLSTNDKTIKLWKISERDKRVEGYNLKDDDGRLRDPFRITSLRVPILKPMDLMVEASPRRIFANAHTYHINSISVNSDHETYLSADDLRINLWHLEITDRSFNIVDIKPANMEELTEVITAAEFHPHHCNVFVYSSSKGTIRLCDMRDSALCDRHSKFFEEPEDPSSRSFFSEIISSISDVKFSNSGRYMMTRDYLSVKVWDLNMESRPVETYQVHEYLRSKLCSLYENDCIFDKFECCWNGSDSAIMTGSYNNFFRMFDRNTRRDITLEASRESSKPRAILKPRKVCTGGKRKKDEINVDSLDFNKKILHTAWHPTDNIIAVAATNNLYIFQDKVN.

WD repeat units follow at residues 26-65, 91-132, 175-213, 224-264, 283-321, 338-379, and 414-447; these read AEAD…KSRP, EIEE…KRVE, AHTY…RSFN, ELTE…LCDR, EIIS…RPVE, ENDC…DITL, and DFNK…DKVN.

Belongs to the phosphatase 2A regulatory subunit B family. In terms of assembly, PP2A consists of a common heterodimeric core enzyme, composed of a 36 kDa catalytic subunit (subunit C) and a 65 kDa constant regulatory subunit (PR65 or subunit A), that associates with a variety of regulatory subunits. Proteins that associate with the core dimer include three families of regulatory subunits B (the R2/B/PR55/B55, R3/B''/PR72/PR130/PR59 and R5/B'/B56 families), the 48 kDa variable regulatory subunit, viral proteins, and cell signaling molecules. Interacts with ensa (when phosphorylated at 'Ser-67') and arpp19 (when phosphorylated at 'Ser-67'), leading to inhibit PP2A activity.

The protein resides in the cytoplasm. Substrate-recognition subunit of protein phosphatase 2A (PP2A) that plays a key role in cell cycle by controlling mitosis entry and exit. The activity of PP2A complexes containing ppp2r2d (PR55-delta) fluctuate during the cell cycle: the activity is high in interphase and low in mitosis. During mitosis, activity of PP2A is inhibited via interaction with phosphorylated ensa and arpp19 inhibitors. PP2A complexes containing ppp2r2d (PR55-delta) also regulate the activity of TGF-beta/Activin/Nodal signaling by restricting receptor activity. Within the PP2A complexes, the B regulatory subunits modulate substrate selectivity and catalytic activity, and may also direct the localization of the catalytic enzyme to a particular subcellular compartment. This chain is Serine/threonine-protein phosphatase 2A 55 kDa regulatory subunit B delta isoform (ppp2r2d), found in Xenopus tropicalis (Western clawed frog).